Consider the following 205-residue polypeptide: Guanylate kinase (205 aa).

Residues 6–185 (GLLIVLSRPS…ACDRIKAIVV (180 aa)) form the Guanylate kinase-like domain. 13 to 20 (RPSGVGKG) serves as a coordination point for ATP.

The protein belongs to the guanylate kinase family.

It localises to the cytoplasm. The catalysed reaction is GMP + ATP = GDP + ADP. Essential for recycling GMP and indirectly, cGMP. This is Guanylate kinase from Bacillus cereus (strain ATCC 14579 / DSM 31 / CCUG 7414 / JCM 2152 / NBRC 15305 / NCIMB 9373 / NCTC 2599 / NRRL B-3711).